The following is a 644-amino-acid chain: Threonine--tRNA ligase (644 aa).

In terms of domain architecture, TGS spans 1-61; sequence MKVSIEGSVV…TACETLEPVY (61 aa). Positions 241–532 are catalytic; that stretch reads DHRKLGTQLD…LTEHFAGAFP (292 aa). Zn(2+)-binding residues include Cys-333, His-384, and His-509.

This sequence belongs to the class-II aminoacyl-tRNA synthetase family. Homodimer. It depends on Zn(2+) as a cofactor.

Its subcellular location is the cytoplasm. It carries out the reaction tRNA(Thr) + L-threonine + ATP = L-threonyl-tRNA(Thr) + AMP + diphosphate + H(+). Its function is as follows. Catalyzes the attachment of threonine to tRNA(Thr) in a two-step reaction: L-threonine is first activated by ATP to form Thr-AMP and then transferred to the acceptor end of tRNA(Thr). Also edits incorrectly charged L-seryl-tRNA(Thr). The polypeptide is Threonine--tRNA ligase (Oleidesulfovibrio alaskensis (strain ATCC BAA-1058 / DSM 17464 / G20) (Desulfovibrio alaskensis)).